A 324-amino-acid polypeptide reads, in one-letter code: Delta-aminolevulinic acid dehydratase (324 aa).

Residues cysteine 118, cysteine 120, and cysteine 128 each contribute to the Zn(2+) site. The active-site Schiff-base intermediate with substrate is lysine 195. 5-aminolevulinate is bound by residues arginine 205 and arginine 217. Residue glutamate 233 participates in Mg(2+) binding. Residue lysine 248 is the Schiff-base intermediate with substrate of the active site. Residues serine 274 and tyrosine 313 each contribute to the 5-aminolevulinate site.

The protein belongs to the ALAD family. In terms of assembly, homooctamer. Zn(2+) is required as a cofactor.

The catalysed reaction is 2 5-aminolevulinate = porphobilinogen + 2 H2O + H(+). Its pathway is porphyrin-containing compound metabolism; protoporphyrin-IX biosynthesis; coproporphyrinogen-III from 5-aminolevulinate: step 1/4. Functionally, catalyzes an early step in the biosynthesis of tetrapyrroles. Binds two molecules of 5-aminolevulinate per subunit, each at a distinct site, and catalyzes their condensation to form porphobilinogen. The sequence is that of Delta-aminolevulinic acid dehydratase (hemB) from Staphylococcus epidermidis (strain ATCC 12228 / FDA PCI 1200).